Consider the following 248-residue polypeptide: ATP synthase subunit a, chloroplastic (248 aa).

Transmembrane regions (helical) follow at residues 38–58, 96–116, 135–155, 200–220, and 221–241; these read QVLITSWIVIAVLLGSATLAV, VPFIGTMFLFIFVSNWAGALF, INTTVALALLTSVAYFYAGFT, LVVAVLVSLVPIVVPIPVMFL, and GLFTSGIQALIFATLAAAYIG.

The protein belongs to the ATPase A chain family. In terms of assembly, F-type ATPases have 2 components, CF(1) - the catalytic core - and CF(0) - the membrane proton channel. CF(1) has five subunits: alpha(3), beta(3), gamma(1), delta(1), epsilon(1). CF(0) has four main subunits: a, b, b' and c.

The protein localises to the plastid. It localises to the chloroplast thylakoid membrane. Key component of the proton channel; it plays a direct role in the translocation of protons across the membrane. This chain is ATP synthase subunit a, chloroplastic, found in Cryptomeria japonica (Japanese cedar).